A 185-amino-acid polypeptide reads, in one-letter code: Pyruvate/ketoisovalerate oxidoreductases common subunit gamma (185 aa).

As to quaternary structure, heterotetramer of one alpha, one beta, one delta and one gamma chain.

The enzyme catalyses 2 oxidized [2Fe-2S]-[ferredoxin] + pyruvate + CoA = 2 reduced [2Fe-2S]-[ferredoxin] + acetyl-CoA + CO2 + H(+). It carries out the reaction 3-methyl-2-oxobutanoate + 2 oxidized [2Fe-2S]-[ferredoxin] + CoA = 2-methylpropanoyl-CoA + 2 reduced [2Fe-2S]-[ferredoxin] + CO2 + H(+). The polypeptide is Pyruvate/ketoisovalerate oxidoreductases common subunit gamma (porG) (Thermococcus kodakarensis (strain ATCC BAA-918 / JCM 12380 / KOD1) (Pyrococcus kodakaraensis (strain KOD1))).